The following is a 190-amino-acid chain: TATA box-binding protein-like 1 (190 aa).

This sequence belongs to the TBP family. As to quaternary structure, binds TFIIA and TFIIB.

The protein resides in the cytoplasm. It localises to the nucleus. Its function is as follows. Part of a specialized transcription system that mediates the transcription of most ribosomal proteins through the 5'-TCT-3' motif which is a core promoter element at these genes. Seems to also mediate the transcription of NF1. Does not bind the TATA box. This Pongo abelii (Sumatran orangutan) protein is TATA box-binding protein-like 1 (TBPL1).